The primary structure comprises 673 residues: Elongation factor G 1 (673 aa).

Residues 3 to 277 (KELRNIGIIA…SIVDYLPSPL (275 aa)) enclose the tr-type G domain. GTP-binding positions include 12–19 (AHIDAGKT), 76–80 (DTPGH), and 130–133 (NKMD).

It belongs to the TRAFAC class translation factor GTPase superfamily. Classic translation factor GTPase family. EF-G/EF-2 subfamily.

The protein resides in the cytoplasm. Its function is as follows. Catalyzes the GTP-dependent ribosomal translocation step during translation elongation. During this step, the ribosome changes from the pre-translocational (PRE) to the post-translocational (POST) state as the newly formed A-site-bound peptidyl-tRNA and P-site-bound deacylated tRNA move to the P and E sites, respectively. Catalyzes the coordinated movement of the two tRNA molecules, the mRNA and conformational changes in the ribosome. The chain is Elongation factor G 1 from Syntrophomonas wolfei subsp. wolfei (strain DSM 2245B / Goettingen).